A 191-amino-acid chain; its full sequence is Programmed cell death protein 6 (191 aa).

N-acetylalanine is present on A2. 5 consecutive EF-hand domains span residues 23–58, 59–89, 90–125, 126–161, and 162–191; these read PDQSFLWNVFQRVDKDRSGVISDNELQQALSNGTWT, PFNPVTVRSIISMFDRENKAGVNFSEFTGVW, KYITDWQNVFRTYDRDNSGMIDKHELKQALSGFGYR, LSDQFHDILIRKFDRQGRGQIAFDDFIQGCIVLQRL, and TDIFRRYDTDQDGWIQVSYEQYLSMVFSIV. Positions 36, 38, 40, 42, and 47 each coordinate Ca(2+). The Ca(2+) site is built by D103, D105, S107, M109, and E114. 4 residues coordinate Mg(2+): D169, D171, D173, and W175.

Homodimer and heterodimer; heterodimerizes (via the EF-hand 5) with PEF1. Isoform 1 and isoform 2 self-associate; probably forming homodimers. Interacts with CPNE4 (via VWFA domain). Interacts with PDCD6IP; the interaction is calcium-dependent. Interacts with RBM22. Interacts with PLSCR4. Interacts with ANXA7 and TSG101. Interacts with DAPK1. Interacts with SEC31A; the interaction is calcium-dependent and promotes monoubiquitination of SEC31A. Interacts with ANXA11 (via N-terminus); the interaction is calcium-dependent. Interacts with PLSCR3 (via N-terminus); the interaction is calcium-dependent. Interacts with MCOLN1; the interaction is calcium-dependent. Interacts with KDR; the interaction is calcium-dependent. Interacts with HEBP2; the interaction is calcium-dependent. Interacts with TFG. Isoform 1: Interacts with SHISA5, leading to stabilize it. Isoform 2: Does not interact with SHISA5. Isoform 2: Does not interact with PDCD6IP, TSG101, ANXA7 and ANXA11.

Its subcellular location is the endoplasmic reticulum membrane. It is found in the cytoplasmic vesicle. The protein resides in the COPII-coated vesicle membrane. It localises to the cytoplasm. The protein localises to the nucleus. Its subcellular location is the endosome. Calcium sensor that plays a key role in processes such as endoplasmic reticulum (ER)-Golgi vesicular transport, endosomal biogenesis or membrane repair. Acts as an adapter that bridges unrelated proteins or stabilizes weak protein-protein complexes in response to calcium: calcium-binding triggers exposure of apolar surface, promoting interaction with different sets of proteins thanks to 3 different hydrophobic pockets, leading to translocation to membranes. Involved in ER-Golgi transport. Regulates ER-Golgi transport by promoting the association between PDCD6IP and TSG101, thereby bridging together the ESCRT-III and ESCRT-I complexes. Together with PEF1, acts as a calcium-dependent adapter for the BCR(KLHL12) complex, a complex involved in ER-Golgi transport by regulating the size of COPII coats. In response to cytosolic calcium increase, the heterodimer formed with PEF1 interacts with, and bridges together the BCR(KLHL12) complex and SEC31 (SEC31A or SEC31B), promoting monoubiquitination of SEC31 and subsequent collagen export, which is required for neural crest specification. Involved in the regulation of the distribution and function of MCOLN1 in the endosomal pathway. Promotes localization and polymerization of TFG at endoplasmic reticulum exit site. Required for T-cell receptor-, Fas-, and glucocorticoid-induced apoptosis. May mediate Ca(2+)-regulated signals along the death pathway: interaction with DAPK1 can accelerate apoptotic cell death by increasing caspase-3 activity. Its role in apoptosis may however be indirect, as suggested by knockout experiments. May inhibit KDR/VEGFR2-dependent angiogenesis; the function involves inhibition of VEGF-induced phosphorylation of the Akt signaling pathway. Functionally, has a lower Ca(2+) affinity than isoform 1. The protein is Programmed cell death protein 6 of Rattus norvegicus (Rat).